The following is a 152-amino-acid chain: Actin-depolymerizing factor 2, isoform c (152 aa).

The ADF-H domain occupies 4-147 (GVKVDPSCKN…DEKSVKSDLM (144 aa)).

The protein belongs to the actin-binding proteins ADF family.

In terms of biological role, depolymerizes growing actin filaments in muscle cells; required for the assembly of actin filaments into the functional contractile myofilament lattice of muscle. This is Actin-depolymerizing factor 2, isoform c from Caenorhabditis elegans.